The following is a 642-amino-acid chain: Threonine--tRNA ligase (642 aa).

Residues 1–61 enclose the TGS domain; that stretch reads MPIITLPDGS…EEDASLEIIT (61 aa). Positions 244–535 are catalytic; the sequence is DHRKIGKQLD…LIEEYAGFFP (292 aa). Residues Cys-335, His-386, and His-512 each coordinate Zn(2+).

Belongs to the class-II aminoacyl-tRNA synthetase family. Homodimer. Requires Zn(2+) as cofactor.

It is found in the cytoplasm. The catalysed reaction is tRNA(Thr) + L-threonine + ATP = L-threonyl-tRNA(Thr) + AMP + diphosphate + H(+). In terms of biological role, catalyzes the attachment of threonine to tRNA(Thr) in a two-step reaction: L-threonine is first activated by ATP to form Thr-AMP and then transferred to the acceptor end of tRNA(Thr). Also edits incorrectly charged L-seryl-tRNA(Thr). The polypeptide is Threonine--tRNA ligase (Vibrio vulnificus (strain YJ016)).